We begin with the raw amino-acid sequence, 207 residues long: Small ribosomal subunit protein uS4 (207 aa).

Positions 30 to 54 (DKCKLDSKPGQHGRTSGARTSDYGN) are disordered. Polar residues predominate over residues 42 to 53 (GRTSGARTSDYG). The S4 RNA-binding domain maps to 97 to 160 (SRLDNVVYRM…KKQVRIAEAL (64 aa)).

Belongs to the universal ribosomal protein uS4 family. Part of the 30S ribosomal subunit. Contacts protein S5. The interaction surface between S4 and S5 is involved in control of translational fidelity.

In terms of biological role, one of the primary rRNA binding proteins, it binds directly to 16S rRNA where it nucleates assembly of the body of the 30S subunit. Its function is as follows. With S5 and S12 plays an important role in translational accuracy. The sequence is that of Small ribosomal subunit protein uS4 from Cupriavidus taiwanensis (strain DSM 17343 / BCRC 17206 / CCUG 44338 / CIP 107171 / LMG 19424 / R1) (Ralstonia taiwanensis (strain LMG 19424)).